Here is a 193-residue protein sequence, read N- to C-terminus: ATP-dependent Clp protease proteolytic subunit (193 aa).

Ser98 functions as the Nucleophile in the catalytic mechanism. Residue His123 is part of the active site.

It belongs to the peptidase S14 family. As to quaternary structure, fourteen ClpP subunits assemble into 2 heptameric rings which stack back to back to give a disk-like structure with a central cavity, resembling the structure of eukaryotic proteasomes.

It is found in the cytoplasm. The enzyme catalyses Hydrolysis of proteins to small peptides in the presence of ATP and magnesium. alpha-casein is the usual test substrate. In the absence of ATP, only oligopeptides shorter than five residues are hydrolyzed (such as succinyl-Leu-Tyr-|-NHMec, and Leu-Tyr-Leu-|-Tyr-Trp, in which cleavage of the -Tyr-|-Leu- and -Tyr-|-Trp bonds also occurs).. Functionally, cleaves peptides in various proteins in a process that requires ATP hydrolysis. Has a chymotrypsin-like activity. Plays a major role in the degradation of misfolded proteins. The chain is ATP-dependent Clp protease proteolytic subunit from Agathobacter rectalis (strain ATCC 33656 / DSM 3377 / JCM 17463 / KCTC 5835 / VPI 0990) (Eubacterium rectale).